A 256-amino-acid chain; its full sequence is Protein FixA (256 aa).

It belongs to the ETF beta-subunit/FixA family. In terms of assembly, heterodimer of FixA and FixB.

Its pathway is amine and polyamine metabolism; carnitine metabolism. In terms of biological role, required for anaerobic carnitine reduction. May bring reductant to CaiA. This Salmonella paratyphi B (strain ATCC BAA-1250 / SPB7) protein is Protein FixA.